The sequence spans 579 residues: Mitochondrial distribution and morphology protein 36 (579 aa).

A disordered region spans residues methionine 1–lysine 27. Serine 42 carries the post-translational modification Phosphoserine. 2 disordered regions span residues threonine 378–leucine 401 and aspartate 446–serine 518. Over residues proline 379 to asparagine 390 the composition is skewed to polar residues. Positions aspartate 446 to histidine 463 are enriched in basic and acidic residues. Over residues proline 495 to serine 518 the composition is skewed to low complexity.

In terms of biological role, involved in mitochondrial distribution and morphology. The chain is Mitochondrial distribution and morphology protein 36 (MDM36) from Saccharomyces cerevisiae (strain ATCC 204508 / S288c) (Baker's yeast).